The following is a 72-amino-acid chain: Large ribosomal subunit protein uL29 (72 aa).

The protein belongs to the universal ribosomal protein uL29 family.

The protein is Large ribosomal subunit protein uL29 of Chlamydia caviae (strain ATCC VR-813 / DSM 19441 / 03DC25 / GPIC) (Chlamydophila caviae).